Consider the following 171-residue polypeptide: 3-hydroxydecanoyl-[acyl-carrier-protein] dehydratase (171 aa).

The active site involves histidine 70.

This sequence belongs to the thioester dehydratase family. FabA subfamily. In terms of assembly, homodimer.

It localises to the cytoplasm. The enzyme catalyses a (3R)-hydroxyacyl-[ACP] = a (2E)-enoyl-[ACP] + H2O. It carries out the reaction (3R)-hydroxydecanoyl-[ACP] = (2E)-decenoyl-[ACP] + H2O. The catalysed reaction is (2E)-decenoyl-[ACP] = (3Z)-decenoyl-[ACP]. Its pathway is lipid metabolism; fatty acid biosynthesis. In terms of biological role, necessary for the introduction of cis unsaturation into fatty acids. Catalyzes the dehydration of (3R)-3-hydroxydecanoyl-ACP to E-(2)-decenoyl-ACP and then its isomerization to Z-(3)-decenoyl-ACP. Can catalyze the dehydratase reaction for beta-hydroxyacyl-ACPs with saturated chain lengths up to 16:0, being most active on intermediate chain length. The protein is 3-hydroxydecanoyl-[acyl-carrier-protein] dehydratase of Shewanella frigidimarina (strain NCIMB 400).